Consider the following 246-residue polypeptide: Uridylate kinase (246 aa).

20–23 (KISG) provides a ligand contact to ATP. The tract at residues 28–33 (GDQGYG) is involved in allosteric activation by GTP. Gly-62 lines the UMP pocket. ATP is bound by residues Gly-63 and Arg-67. UMP contacts are provided by residues Asp-82 and 143-150 (TGNPYFTT). ATP-binding residues include Thr-170, Tyr-176, and Asp-179.

This sequence belongs to the UMP kinase family. In terms of assembly, homohexamer.

It is found in the cytoplasm. It catalyses the reaction UMP + ATP = UDP + ADP. It functions in the pathway pyrimidine metabolism; CTP biosynthesis via de novo pathway; UDP from UMP (UMPK route): step 1/1. Allosterically activated by GTP. Inhibited by UTP. Catalyzes the reversible phosphorylation of UMP to UDP. This Cereibacter sphaeroides (strain ATCC 17023 / DSM 158 / JCM 6121 / CCUG 31486 / LMG 2827 / NBRC 12203 / NCIMB 8253 / ATH 2.4.1.) (Rhodobacter sphaeroides) protein is Uridylate kinase.